We begin with the raw amino-acid sequence, 164 residues long: Peptidyl-prolyl cis-trans isomerase A-like 4A (164 aa).

Residues 7-163 enclose the PPIase cyclophilin-type domain; the sequence is FFDITVDGKP…KKITIADCGQ (157 aa).

Belongs to the cyclophilin-type PPIase family. PPIase A subfamily. In terms of tissue distribution, highly expressed in brain, ovary and mammary gland. Moderately expressed in lung, salivary gland, kidney, skin, adipose tissue, intestine and spleen. Weakly expressed in skeletal muscle, liver and stomach. Expressed in pleiomorphic and undifferentiated liposarcomas, osteosarcomas and breast carcinomas.

Its subcellular location is the cytoplasm. The enzyme catalyses [protein]-peptidylproline (omega=180) = [protein]-peptidylproline (omega=0). In terms of biological role, PPIases accelerate the folding of proteins. It catalyzes the cis-trans isomerization of proline imidic peptide bonds in oligopeptides. The chain is Peptidyl-prolyl cis-trans isomerase A-like 4A from Homo sapiens (Human).